The following is a 657-amino-acid chain: THO complex subunit 1 (657 aa).

At Met-1 the chain carries N-acetylmethionine. Ser-2 carries the post-translational modification Phosphoserine. Residue Thr-4 is modified to Phosphothreonine. Lys-31 is covalently cross-linked (Glycyl lysine isopeptide (Lys-Gly) (interchain with G-Cter in SUMO2)). Position 133 is an N6-acetyllysine (Lys-133). The dock domain; interaction with THOC2 stretch occupies residues 133 to 167; the sequence is KNYLLRMCNDLLRRLSKSQNTVFCGRIQLFLARLF. The segment at 194–221 is disordered; it reads QESTLGQKHTEDREEGMDVEEGEMGDDE. Acidic residues predominate over residues 206 to 221; the sequence is REEGMDVEEGEMGDDE. The dock domain; interaction with THOC2 stretch occupies residues 227-397; it reads SIPIDYNLYR…WNSWKNEGCP (171 aa). Lys-300 is subject to N6-acetyllysine. A Glycyl lysine isopeptide (Lys-Gly) (interchain with G-Cter in SUMO2) cross-link involves residue Lys-408. The short motif at 414-430 is the Nuclear localization signal element; the sequence is RKRAAPEDFLGKGPNKK. Residues 533-569 form a disordered region; the sequence is LPPPSEEIKTGEDEDEEDNDALLKENESPDVRRDKPI. Position 537 is a phosphoserine (Ser-537). Thr-542 is subject to Phosphothreonine. The span at 553 to 569 shows a compositional bias: basic and acidic residues; that stretch reads ALLKENESPDVRRDKPI. Position 560 is a phosphoserine (Ser-560). Residues 570–653 enclose the Death domain; it reads TGEQIESFAN…DLAESLTNDT (84 aa). Lys-580 participates in a covalent cross-link: Glycyl lysine isopeptide (Lys-Gly) (interchain with G-Cter in SUMO2). Lys-595 is covalently cross-linked (Glycyl lysine isopeptide (Lys-Gly) (interchain with G-Cter in SUMO1); alternate). Lys-595 is covalently cross-linked (Glycyl lysine isopeptide (Lys-Gly) (interchain with G-Cter in SUMO2); alternate).

Belongs to the THOC1 family. As to quaternary structure, component of the THO subcomplex, which is composed of THOC1, THOC2, THOC3, THOC5, THOC6 and THOC7. The THO subcomplex interacts with DDX39B to form the THO-DDX39B complex which multimerizes into a 28-subunit tetrameric assembly. Component of the transcription/export (TREX) complex at least composed of ALYREF/THOC4, DDX39B, SARNP/CIP29, CHTOP and the THO subcomplex; in the complex interacts with THOC2, THOC5 and THOC7. TREX seems to have a dynamic structure involving ATP-dependent remodeling. Binds to the hypophosphorylated form of RB1. Interacts with RNA polymerase II. Interacts with LUZP4. Interacts with THOC5. Post-translationally, expression is altered specifically during apoptosis and is accompanied by the appearance of novel forms with smaller apparent molecular mass. In terms of processing, polyubiquitinated, leading to proteasomal degradation; probably involves NEDD4. In terms of tissue distribution, in the inner ear, specifically expressed in inner and outer hair cells (at protein level).

The protein resides in the nucleus. It is found in the nucleoplasm. Its subcellular location is the nucleus matrix. It localises to the cytoplasm. The protein localises to the cytosol. Functionally, component of the THO subcomplex of the TREX complex which is thought to couple mRNA transcription, processing and nuclear export, and which specifically associates with spliced mRNA and not with unspliced pre-mRNA. Required for efficient export of polyadenylated RNA. The THOC1-THOC2-THOC3 core complex alone is sufficient to bind export factor NXF1-NXT1 and promote ATPase activity of DDX39B. TREX is recruited to spliced mRNAs by a transcription-independent mechanism, binds to mRNA upstream of the exon-junction complex (EJC) and is recruited in a splicing- and cap-dependent manner to a region near the 5' end of the mRNA where it functions in mRNA export to the cytoplasm via the TAP/NXF1 pathway. Regulates transcriptional elongation of a subset of genes. Involved in genome stability by preventing co-transcriptional R-loop formation. May play a role in hair cell formation, hence may be involved in hearing. In terms of biological role, participates in an apoptotic pathway which is characterized by activation of caspase-6, increases in the expression of BAK1 and BCL2L1 and activation of NF-kappa-B. This pathway does not require p53/TP53, nor does the presence of p53/TP53 affect the efficiency of cell killing. Activates a G2/M cell cycle checkpoint prior to the onset of apoptosis. Apoptosis is inhibited by association with RB1. Essential for early embryonic development. Required for normal gene expression during postnatal testis development. This is THO complex subunit 1 (Thoc1) from Mus musculus (Mouse).